A 322-amino-acid chain; its full sequence is Protease HtpX homolog (322 aa).

Transmembrane regions (helical) follow at residues 19–39 (ILLI…CYLL) and 61–81 (FINL…IAYF). H165 is a binding site for Zn(2+). E166 is an active-site residue. Zn(2+) is bound at residue H169. 2 helical membrane-spanning segments follow: residues 175-195 (VRLL…AQIA) and 216-236 (ILIL…ATLM). Position 245 (E245) interacts with Zn(2+).

The protein belongs to the peptidase M48B family. Zn(2+) serves as cofactor.

The protein resides in the cell inner membrane. The chain is Protease HtpX homolog from Bacteroides fragilis (strain YCH46).